The following is a 323-amino-acid chain: Acetyl-coenzyme A carboxylase carboxyl transferase subunit alpha (323 aa).

The region spanning 36–293 (ELELLSAKAQ…KEEVVKNLQI (258 aa)) is the CoA carboxyltransferase C-terminal domain.

It belongs to the AccA family. Acetyl-CoA carboxylase is a heterohexamer composed of biotin carboxyl carrier protein (AccB), biotin carboxylase (AccC) and two subunits each of ACCase subunit alpha (AccA) and ACCase subunit beta (AccD).

It is found in the cytoplasm. The catalysed reaction is N(6)-carboxybiotinyl-L-lysyl-[protein] + acetyl-CoA = N(6)-biotinyl-L-lysyl-[protein] + malonyl-CoA. Its pathway is lipid metabolism; malonyl-CoA biosynthesis; malonyl-CoA from acetyl-CoA: step 1/1. Its function is as follows. Component of the acetyl coenzyme A carboxylase (ACC) complex. First, biotin carboxylase catalyzes the carboxylation of biotin on its carrier protein (BCCP) and then the CO(2) group is transferred by the carboxyltransferase to acetyl-CoA to form malonyl-CoA. This is Acetyl-coenzyme A carboxylase carboxyl transferase subunit alpha from Carboxydothermus hydrogenoformans (strain ATCC BAA-161 / DSM 6008 / Z-2901).